Reading from the N-terminus, the 455-residue chain is Ribulose bisphosphate carboxylase large chain (455 aa).

An N6,N6,N6-trimethyllysine modification is found at lysine 5. The substrate site is built by asparagine 114 and threonine 164. Catalysis depends on lysine 166, which acts as the Proton acceptor. Lysine 168 serves as a coordination point for substrate. The Mg(2+) site is built by lysine 192, aspartate 194, and glutamate 195. N6-carboxylysine is present on lysine 192. The active-site Proton acceptor is the histidine 285. Residues arginine 286, histidine 318, and serine 370 each coordinate substrate.

The protein belongs to the RuBisCO large chain family. Type I subfamily. In terms of assembly, heterohexadecamer of 8 large chains and 8 small chains; disulfide-linked. The disulfide link is formed within the large subunit homodimers. The cofactor is Mg(2+). In terms of processing, the disulfide bond which can form in the large chain dimeric partners within the hexadecamer appears to be associated with oxidative stress and protein turnover.

It localises to the plastid. Its subcellular location is the chloroplast. The enzyme catalyses 2 (2R)-3-phosphoglycerate + 2 H(+) = D-ribulose 1,5-bisphosphate + CO2 + H2O. It catalyses the reaction D-ribulose 1,5-bisphosphate + O2 = 2-phosphoglycolate + (2R)-3-phosphoglycerate + 2 H(+). In terms of biological role, ruBisCO catalyzes two reactions: the carboxylation of D-ribulose 1,5-bisphosphate, the primary event in carbon dioxide fixation, as well as the oxidative fragmentation of the pentose substrate in the photorespiration process. Both reactions occur simultaneously and in competition at the same active site. This chain is Ribulose bisphosphate carboxylase large chain, found in Lupinus arcticus (Arctic lupine).